A 483-amino-acid chain; its full sequence is Auxin transporter-like protein 2 (483 aa).

Topologically, residues 1 to 53 (MENGEKAAETVVVGNYVEMEKDGKALDIKSKLSDMFWHGGSAYDAWFSCASNQ) are cytoplasmic. Residues 54-71 (VAQVLLTLPYSFSQLGML) traverse the membrane as a helical segment. The Extracellular portion of the chain corresponds to 72–73 (SG). Residues 74–94 (ILFQLFYGILGSWTAYLISIL) form a helical membrane-spanning segment. At 95 to 130 (YVEYRTRKEREKVNFRNHVIQWFEVLDGLLGKHWRN) the chain is on the cytoplasmic side. The helical transmembrane segment at 131 to 151 (VGLAFNCTFLLFGSVIQLIAC) threads the bilayer. Residues 152–166 (ASNIYYINDNLDKRT) lie on the Extracellular side of the membrane. The helical transmembrane segment at 167–187 (WTYIFGACCATTVFIPSFHNY) threads the bilayer. Topologically, residues 188–190 (RIW) are cytoplasmic. Residues 191 to 211 (SFLGLLMTTYTAWYLTIASIL) traverse the membrane as a helical segment. Over 212–226 (HGQVEGVKHSGPSKL) the chain is Extracellular. Residues 227 to 247 (VLYFTGATNILYTFGGHAVTV) traverse the membrane as a helical segment. Over 248 to 261 (EIMHAMWKPQKFKS) the chain is Cytoplasmic. Residues 262–282 (IYLFATLYVLTLTLPSASAVY) traverse the membrane as a helical segment. The Extracellular portion of the chain corresponds to 283-306 (WAFGDLLLNHSNAFALLPKNLYRD). An N-linked (GlcNAc...) asparagine glycan is attached at N291. Residues 307–327 (FAVVLMLIHQFITFGFACTPL) form a helical membrane-spanning segment. Residues 328 to 350 (YFVWEKLIGMHECRSMCKRAAAR) lie on the Cytoplasmic side of the membrane. The chain crosses the membrane as a helical span at residues 351–371 (LPVVIPIWFLAIIFPFFGPIN). Residues 372-374 (STV) lie on the Extracellular side of the membrane. Residues 375–395 (GSLLVSFTVYIIPALAHIFTF) traverse the membrane as a helical segment. Over 396 to 422 (RSSAARENAVEQPPRFLGRWTGAFTIN) the chain is Cytoplasmic. The chain crosses the membrane as a helical span at residues 423-443 (AFIVVWVFIVGFGFGGWASMI). Residues 444 to 483 (NFVHQIDTFGLFTKCYQCPPPVMVSPPPISHPHFNHTHGL) lie on the Extracellular side of the membrane. N478 carries an N-linked (GlcNAc...) asparagine glycan.

The protein belongs to the amino acid/polyamine transporter 2 family. Amino acid/auxin permease (AAAP) (TC 2.A.18.1) subfamily.

It localises to the cell membrane. Carrier protein involved in proton-driven auxin influx. Mediates the formation of auxin gradient from developing leaves (site of auxin biosynthesis) to tips by contributing to the loading of auxin in vascular tissues and facilitating acropetal (base to tip) auxin transport within inner tissues of the root apex, and basipetal (tip to base) auxin transport within outer tissues of the root apex. This is Auxin transporter-like protein 2 (LAX2) from Arabidopsis thaliana (Mouse-ear cress).